The primary structure comprises 203 residues: Proteasome subunit beta 1 (203 aa).

A propeptide spans 1-7 (removed in mature form; by autocatalysis); it reads MAEKLKG. Residue threonine 8 is the Nucleophile of the active site.

Belongs to the peptidase T1B family. As to quaternary structure, the 20S proteasome core is composed of 14 alpha and 14 beta subunits that assemble into four stacked heptameric rings, resulting in a barrel-shaped structure. The two inner rings, each composed of seven catalytic beta subunits, are sandwiched by two outer rings, each composed of seven alpha subunits. The catalytic chamber with the active sites is on the inside of the barrel. Has a gated structure, the ends of the cylinder being occluded by the N-termini of the alpha-subunits. Is capped at one or both ends by the proteasome regulatory ATPase, PAN.

It is found in the cytoplasm. The catalysed reaction is Cleavage of peptide bonds with very broad specificity.. With respect to regulation, the formation of the proteasomal ATPase PAN-20S proteasome complex, via the docking of the C-termini of PAN into the intersubunit pockets in the alpha-rings, triggers opening of the gate for substrate entry. Interconversion between the open-gate and close-gate conformations leads to a dynamic regulation of the 20S proteasome proteolysis activity. Its function is as follows. Component of the proteasome core, a large protease complex with broad specificity involved in protein degradation. This is Proteasome subunit beta 1 from Thermococcus onnurineus (strain NA1).